The following is a 213-amino-acid chain: MGQKVHPFGFRLGYNKNWQSRWFSKKEYPAFVYEDSKIRAFVKKLLYHAGLSKIEIERAGGKVRLILSTARPGIVIGRKGVEIEKLRNDLRQKFGREFSLEVNEIRRPEVDAQLVAENIAQQLERRVAFRRAMKRTVSMARKFGGEGIKVTCSGRLAGAEIARTEWYRDGRVPLQTLRADIDYGFAEARTTYGIIGVKVWIYKGEILDKEVDQ.

The KH type-2 domain occupies 38-106 (IRAFVKKLLY…EFSLEVNEIR (69 aa)).

It belongs to the universal ribosomal protein uS3 family. As to quaternary structure, part of the 30S ribosomal subunit. Forms a tight complex with proteins S10 and S14.

In terms of biological role, binds the lower part of the 30S subunit head. Binds mRNA in the 70S ribosome, positioning it for translation. The chain is Small ribosomal subunit protein uS3 from Desulfovibrio desulfuricans (strain ATCC 27774 / DSM 6949 / MB).